Consider the following 578-residue polypeptide: Octopamine receptor 2 (578 aa).

At 1–84 (MMSFPIALFA…YDSITIFITV (84 aa)) the chain is on the extracellular side. Residues Asn-13, Asn-38, Asn-46, and Asn-59 are each glycosylated (N-linked (GlcNAc...) asparagine). The helical transmembrane segment at 85–107 (AVVLTLITLWTILGNFFVLMALY) threads the bilayer. Over 108 to 117 (RYGTLRTMSN) the chain is Cytoplasmic. A helical membrane pass occupies residues 118 to 139 (CLIGNLAISDLLLAVTVLPIST). Topologically, residues 140-156 (VHDLLGYWVFGEFTCTL) are extracellular. A disulfide bridge connects residues Cys-154 and Cys-239. The helical transmembrane segment at 157 to 177 (WLCMDVLYCTASIWGLCTVAF) threads the bilayer. The Cytoplasmic portion of the chain corresponds to 178 to 197 (DRYLATVYPVWYHDQRSVRK). Residues 198 to 220 (AVGCIVFVWIFSIVISFAPFIGW) form a helical membrane-spanning segment. Residues 221-251 (QHMIPSFFSFNASIQRYQCILFTSSSYVLYS) are Extracellular-facing. An N-linked (GlcNAc...) asparagine glycan is attached at Asn-231. A helical transmembrane segment spans residues 252–272 (SMGSFVIPAILMAFMYVRIFV). Over 273–495 (VLHNQSRGVK…ELREQRATKR (223 aa)) the chain is Cytoplasmic. Residues 496–517 (MLLIMACFCVCWMPFLFMYILR) form a helical membrane-spanning segment. Over 518-531 (SVCDTCHMNQHFVA) the chain is Extracellular. The helical transmembrane segment at 532-553 (AIIWLGYVNSSLNPVLYTLFND) threads the bilayer. Residues 554 to 578 (DFKVAFKRLIGARSPSAYRSPGPRR) lie on the Cytoplasmic side of the membrane.

This sequence belongs to the G-protein coupled receptor 1 family.

The protein localises to the cell membrane. In terms of biological role, receptor for octopamine. Octopamine (OA) is a neurotransmitter, neurohormone, and neuromodulator in invertebrates. This receptor induces a long lasting opening of voltage- independent chloride channels, a process which seems to involve protein phosphorylation but does not require either cAPK or PKC. The rank order of potency for agonists is p-synephrine &gt; p-octopamine &gt; xylometazoline &gt; B-HT920 &gt; norepinephrine = clonidine &gt; epinephrine &gt; p-tyramine &gt; phenylephrine = oxymetazoline = mehoxamine = dopamine &gt; serotonin &gt; histamine. For antagonists, the rank order is rauwolscine = mianserin &gt; phentolamine &gt; chlorpromazine &gt; spiperone &gt; yohimbine &gt; propanolol &gt; alprenolol &gt; prazosine &gt; pindolol. The sequence is that of Octopamine receptor 2 from Lymnaea stagnalis (Great pond snail).